The chain runs to 147 residues: PTPN13-like protein, Y-linked (147 aa).

As to expression, expressed in testis. Detected in spermatocytes, spermatids and spermatozoa (at protein level).

The chain is PTPN13-like protein, Y-linked (PRY) from Homo sapiens (Human).